The chain runs to 656 residues: Cyclic AMP-dependent transcription factor ATF-6 alpha (656 aa).

Residues 1-137 form a transcription activation region; that stretch reads MESPFSPVLP…SPSSAEPLKE (137 aa). Lys75 is covalently cross-linked (Glycyl lysine isopeptide (Lys-Gly) (interchain with G-Cter in SUMO2)). 2 stretches are compositionally biased toward low complexity: residues 81–101 and 111–121; these read LSPA…SCSS and LLSSSQSPLSL. The disordered stretch occupies residues 81 to 171; sequence LSPASSSCSV…SKPSVQPKPL (91 aa). Lys139 is covalently cross-linked (Glycyl lysine isopeptide (Lys-Gly) (interchain with G-Cter in ubiquitin)). One can recognise a bZIP domain in the interval 293–356; that stretch reads VLRRQQRMIK…DQVVSENQRL (64 aa). The interval 295–326 is basic motif; it reads RRQQRMIKNRESACQSRKKKKEYMLGLEARLK. Residues 335-342 form a leucine-zipper region; sequence LKKENGSL. The helical; Signal-anchor for type II membrane protein transmembrane segment at 378 to 398 threads the bilayer; sequence NYGPMSMLEQDSRRVKPSVSP. At 399–656 the chain is on the lumenal side; it reads ANQRRHLLEF…VVSTLPESVQ (258 aa). An interaction with THBS4 region spans residues 455–575; it reads QPLINTTESL…ATTHNKTTRP (121 aa). N-linked (GlcNAc...) asparagine glycosylation is found at Asn459, Asn570, and Asn629. The disordered stretch occupies residues 632–656; sequence STFFGSPPTATETTHVVSTLPESVQ.

The protein belongs to the bZIP family. ATF subfamily. As to quaternary structure, interacts with XBP1 isoform 2; the interaction occurs in a ER stress-dependent manner. Interacts with LACC1. In terms of assembly, interacts with THBS4 (via EGF-like 3; calcium-binding domain) which facilitates its processing, activation and nuclear translocation. Interacts (via lumenal domain) with THBS1. Homodimer and heterodimer with ATF6-beta. The dimer interacts with the nuclear transcription factor Y (NF-Y) trimer through direct binding to NF-Y subunit C (NF-YC). Also interacts with the transcription factors GTF2I, YY1 and SRF. Post-translationally, during unfolded protein response, a fragment of approximately 50 kDa containing the cytoplasmic transcription factor domain is released by proteolysis. The cleavage seems to be performed sequentially by site-1 (MBTPS1, S1P) and site-2 (MBTPS2, S2P) proteases. N-glycosylated; in its luminal domain. The glycosylation status may serve as a sensor for ER homeostasis, resulting in ATF6 activation to trigger the unfolded protein response (UPR). In terms of processing, ubiquitinated by RNF186 at Lys-139, which is required for pattern recognition receptor-induced unfolded protein response-associated outcomes.

The protein localises to the endoplasmic reticulum membrane. Its subcellular location is the golgi apparatus membrane. It localises to the nucleus. Its function is as follows. Precursor of the transcription factor form (Processed cyclic AMP-dependent transcription factor ATF-6 alpha), which is embedded in the endoplasmic reticulum membrane. Endoplasmic reticulum stress promotes processing of this form, releasing the transcription factor form that translocates into the nucleus, where it activates transcription of genes involved in the unfolded protein response (UPR). Transcription factor that initiates the unfolded protein response (UPR) during endoplasmic reticulum stress by activating transcription of genes involved in the UPR. Binds DNA on the 5'-CCAC[GA]-3'half of the ER stress response element (ERSE) (5'-CCAAT-N(9)-CCAC[GA]-3') and of ERSE II (5'-ATTGG-N-CCACG-3'). Binding to ERSE requires binding of NF-Y to ERSE. Could also be involved in activation of transcription by the serum response factor. May play a role in foveal development and cone function in the retina. In Rattus norvegicus (Rat), this protein is Cyclic AMP-dependent transcription factor ATF-6 alpha (Atf6).